Here is a 283-residue protein sequence, read N- to C-terminus: Ribosome biogenesis GTPase A (283 aa).

One can recognise a CP-type G domain in the interval 14–178; sequence RREVTEKLKL…LLDTPGILWP (165 aa). Residues 58–61, 86–87, 130–135, and G174 each bind GTP; these read NKAD, NS, and NVGKST.

Belongs to the TRAFAC class YlqF/YawG GTPase family. MTG1 subfamily. Interacts with ctc. Interacts with the immature 50S ribosome subunit. 2 molecules of rbgA bind to one 50S subunit.

The protein resides in the cytoplasm. Its function is as follows. Essential protein that is required for a late step of 50S ribosomal subunit assembly. Has GTPase activity that is stimulated by interaction with the immature 50S ribosome subunit. Binds to the 23S rRNA. Required for the association of ribosomal proteins rplP and rpmA with the large subunit. In Bacillus licheniformis (strain ATCC 14580 / DSM 13 / JCM 2505 / CCUG 7422 / NBRC 12200 / NCIMB 9375 / NCTC 10341 / NRRL NRS-1264 / Gibson 46), this protein is Ribosome biogenesis GTPase A.